The chain runs to 585 residues: PiggyBac transposable element-derived protein 4 (585 aa).

Residues 1 to 73 (MSNPRKRSIP…STSSDSGRSM (73 aa)) are disordered. The segment covering 25 to 40 (DSFDESDFSEIDDSDN) has biased composition (acidic residues). Residues 47 to 61 (EADKIRPLSHLESDG) are compositionally biased toward basic and acidic residues. The span at 62 to 72 (KSSTSSDSGRS) shows a compositional bias: low complexity.

The sequence is that of PiggyBac transposable element-derived protein 4 (PGBD4) from Homo sapiens (Human).